A 142-amino-acid chain; its full sequence is Small heat shock protein IbpB (142 aa).

The region spanning 26–137 (AGESQSFPPY…AAQRIAISER (112 aa)) is the sHSP domain.

It belongs to the small heat shock protein (HSP20) family. As to quaternary structure, homodimer. Forms homomultimers of about 100-150 subunits at optimal growth temperatures. Conformation changes to oligomers at high temperatures or high ionic concentrations. The decrease in size of the multimers is accompanied by an increase in chaperone activity.

The protein resides in the cytoplasm. In terms of biological role, associates with aggregated proteins, together with IbpA, to stabilize and protect them from irreversible denaturation and extensive proteolysis during heat shock and oxidative stress. Aggregated proteins bound to the IbpAB complex are more efficiently refolded and reactivated by the ATP-dependent chaperone systems ClpB and DnaK/DnaJ/GrpE. Its activity is ATP-independent. This Escherichia coli O7:K1 (strain IAI39 / ExPEC) protein is Small heat shock protein IbpB.